The following is a 544-amino-acid chain: Cannabidiolic acid synthase (544 aa).

The first 28 residues, 1–28 (MKCSTFSFWFVCKIIFFFFSFNIQTSIA), serve as a signal peptide directing secretion. Residues C37 and C99 are joined by a disulfide bond. N45 and N65 each carry an N-linked (GlcNAc...) asparagine glycan. An FAD-binding PCMH-type domain is found at 77 to 251 (TTPKPLVIVT…VAWKIRLVAV (175 aa)). FAD is bound by residues 109–115 (TRSGGHD) and S120. Positions 114 to 176 (HDSEGMSYIS…ENLSLAAGYC (63 aa)) form a cross-link, 6-(S-cysteinyl)-8alpha-(pros-histidyl)-FAD (His-Cys). N168 is a glycosylation site (N-linked (GlcNAc...) asparagine). FAD contacts are provided by residues C176, 180–184 (CAGGH), Y190, E236, and I241. Cannabigerolate is bound at residue H291. N296, N304, and N328 each carry an N-linked (GlcNAc...) asparagine glycan. Y416 and E441 together coordinate cannabigerolate. 480-482 (YLN) contributes to the FAD binding site. The active-site Proton acceptor is Y483. N-linked (GlcNAc...) asparagine glycosylation occurs at N498.

This sequence belongs to the oxygen-dependent FAD-linked oxidoreductase family. In terms of assembly, monomer. FAD is required as a cofactor. In terms of processing, glycosylated. The FAD cofactor is bound via a bicovalent 6-S-cysteinyl, 8alpha-N1-histidyl FAD linkage. In terms of tissue distribution, expressed in young leaves.

The protein resides in the secreted. It localises to the extracellular space. It is found in the apoplast. It catalyses the reaction cannabigerolate + O2 = cannabidiolate + H2O2. Its pathway is secondary metabolite biosynthesis; terpenoid biosynthesis. With respect to regulation, inhibited by Hg(2+). Oxidoreductase involved in the biosynthesis of cannabinoids-related terpenophenolic natural products, which have pharmacological activity. Catalyzes the stereoselective oxidative cyclization of the monoterpene moiety in cannabigerolic acid (CBGA), producing cannabidiolate (CBDA), the major cannabioid in fiber-type Cannabis plants. Can also use cannabinerolic acid as substrate, but not cannabigerol or cannabinerol. In Cannabis sativa (Hemp), this protein is Cannabidiolic acid synthase.